Reading from the N-terminus, the 524-residue chain is Thioredoxin reductase 2, mitochondrial (524 aa).

The transit peptide at 1–36 (MAAMAVALRGLGGRFRWRTQAVAGGVRGAARGAAAG) directs the protein to the mitochondrion. Residue 41-70 (DLLVVGGGSGGLACAKEAAQLGRKVAVVDY) participates in FAD binding. A disulfide bridge links C86 with C91. N6-succinyllysine is present on residues K175 and K329. The active-site Proton acceptor is H497. The cysteinyl-selenocysteine (Cys-Sec) cross-link spans 522–523 (CU). Residue U523 is a non-standard amino acid, selenocysteine.

This sequence belongs to the class-I pyridine nucleotide-disulfide oxidoreductase family. In terms of assembly, homodimer. Requires FAD as cofactor. In terms of tissue distribution, highly expressed in the prostate, ovary, liver, testis, uterus, colon and small intestine. Intermediate levels in brain, skeletal muscle, heart and spleen. Low levels in placenta, pancreas, thymus and peripheral blood leukocytes. According to PubMed:10608886, high levels in kidney, whereas according to PubMed:9923614, levels are low. High expression is observed in the adrenal cortex.

Its subcellular location is the mitochondrion. The catalysed reaction is [thioredoxin]-dithiol + NADP(+) = [thioredoxin]-disulfide + NADPH + H(+). In terms of biological role, involved in the control of reactive oxygen species levels and the regulation of mitochondrial redox homeostasis. Maintains thioredoxin in a reduced state. May play a role in redox-regulated cell signaling. This chain is Thioredoxin reductase 2, mitochondrial, found in Homo sapiens (Human).